The primary structure comprises 319 residues: Acetyl-coenzyme A carboxylase carboxyl transferase subunit alpha (319 aa).

The CoA carboxyltransferase C-terminal domain occupies 32 to 293; sequence NIQEEISRLQ…HTALAEALQT (262 aa).

Belongs to the AccA family. As to quaternary structure, acetyl-CoA carboxylase is a heterohexamer composed of biotin carboxyl carrier protein (AccB), biotin carboxylase (AccC) and two subunits each of ACCase subunit alpha (AccA) and ACCase subunit beta (AccD).

Its subcellular location is the cytoplasm. The enzyme catalyses N(6)-carboxybiotinyl-L-lysyl-[protein] + acetyl-CoA = N(6)-biotinyl-L-lysyl-[protein] + malonyl-CoA. The protein operates within lipid metabolism; malonyl-CoA biosynthesis; malonyl-CoA from acetyl-CoA: step 1/1. Functionally, component of the acetyl coenzyme A carboxylase (ACC) complex. First, biotin carboxylase catalyzes the carboxylation of biotin on its carrier protein (BCCP) and then the CO(2) group is transferred by the carboxyltransferase to acetyl-CoA to form malonyl-CoA. In Thioalkalivibrio sulfidiphilus (strain HL-EbGR7), this protein is Acetyl-coenzyme A carboxylase carboxyl transferase subunit alpha.